The chain runs to 95 residues: Co-chaperonin GroES (95 aa).

It belongs to the GroES chaperonin family. Heptamer of 7 subunits arranged in a ring. Interacts with the chaperonin GroEL.

The protein resides in the cytoplasm. Functionally, together with the chaperonin GroEL, plays an essential role in assisting protein folding. The GroEL-GroES system forms a nano-cage that allows encapsulation of the non-native substrate proteins and provides a physical environment optimized to promote and accelerate protein folding. GroES binds to the apical surface of the GroEL ring, thereby capping the opening of the GroEL channel. The sequence is that of Co-chaperonin GroES from Cereibacter sphaeroides (strain ATCC 17025 / ATH 2.4.3) (Rhodobacter sphaeroides).